The sequence spans 146 residues: ATP synthase epsilon chain (146 aa).

The protein belongs to the ATPase epsilon chain family. As to quaternary structure, F-type ATPases have 2 components, CF(1) - the catalytic core - and CF(0) - the membrane proton channel. CF(1) has five subunits: alpha(3), beta(3), gamma(1), delta(1), epsilon(1). CF(0) has three main subunits: a, b and c.

The protein resides in the cell inner membrane. In terms of biological role, produces ATP from ADP in the presence of a proton gradient across the membrane. This is ATP synthase epsilon chain from Rhodospirillum centenum (strain ATCC 51521 / SW).